Consider the following 45-residue polypeptide: Large ribosomal subunit protein bL34 (45 aa).

A compositionally biased stretch (polar residues) spans 1–10; that stretch reads MTQRTLGGTN. The disordered stretch occupies residues 1-45; it reads MTQRTLGGTNRKQKRTSGFRARMRKSNGRKVIQARRKKGRHRLSV. Residues 11-45 are compositionally biased toward basic residues; it reads RKQKRTSGFRARMRKSNGRKVIQARRKKGRHRLSV.

It belongs to the bacterial ribosomal protein bL34 family.

The polypeptide is Large ribosomal subunit protein bL34 (Crocosphaera subtropica (strain ATCC 51142 / BH68) (Cyanothece sp. (strain ATCC 51142))).